A 319-amino-acid chain; its full sequence is Ribonuclease Z (319 aa).

Residues His-62, His-64, Asp-66, His-67, His-145, Asp-216, and His-274 each contribute to the Zn(2+) site. Asp-66 acts as the Proton acceptor in catalysis.

It belongs to the RNase Z family. In terms of assembly, homodimer. It depends on Zn(2+) as a cofactor.

It catalyses the reaction Endonucleolytic cleavage of RNA, removing extra 3' nucleotides from tRNA precursor, generating 3' termini of tRNAs. A 3'-hydroxy group is left at the tRNA terminus and a 5'-phosphoryl group is left at the trailer molecule.. Functionally, zinc phosphodiesterase, which displays some tRNA 3'-processing endonuclease activity. Probably involved in tRNA maturation, by removing a 3'-trailer from precursor tRNA. In Synechococcus sp. (strain CC9902), this protein is Ribonuclease Z.